The chain runs to 378 residues: Myoglobin (378 aa).

Heme is bound at residue His332.

Belongs to the indoleamine 2,3-dioxygenase family. In terms of assembly, homodimer. Requires heme as cofactor.

Functionally, serves a reserve supply of oxygen and facilitates the movement of oxygen within muscles. The protein is Myoglobin of Haliotis madaka (Giant abalone).